The following is a 150-amino-acid chain: Transcriptional repressor NrdR (150 aa).

A zinc finger lies at 3 to 33 (CPFCGGESRVLESRPASDEEAVRRRRECLAC). Residues 48–138 (LIVVKKDGRR…VYREFKDLNE (91 aa)) form the ATP-cone domain.

This sequence belongs to the NrdR family. It depends on Zn(2+) as a cofactor.

In terms of biological role, negatively regulates transcription of bacterial ribonucleotide reductase nrd genes and operons by binding to NrdR-boxes. This chain is Transcriptional repressor NrdR, found in Symbiobacterium thermophilum (strain DSM 24528 / JCM 14929 / IAM 14863 / T).